The primary structure comprises 266 residues: Thymidylate synthase (266 aa).

Arg24 contacts dUMP. His54 provides a ligand contact to (6R)-5,10-methylene-5,6,7,8-tetrahydrofolate. Residue 129 to 130 (RR) participates in dUMP binding. The active-site Nucleophile is Cys149. DUMP is bound by residues 169–172 (RSAD), Asn180, and 210–212 (HIY). Asp172 lines the (6R)-5,10-methylene-5,6,7,8-tetrahydrofolate pocket. Ala265 lines the (6R)-5,10-methylene-5,6,7,8-tetrahydrofolate pocket.

This sequence belongs to the thymidylate synthase family. Bacterial-type ThyA subfamily. Homodimer.

It localises to the cytoplasm. The enzyme catalyses dUMP + (6R)-5,10-methylene-5,6,7,8-tetrahydrofolate = 7,8-dihydrofolate + dTMP. It functions in the pathway pyrimidine metabolism; dTTP biosynthesis. Functionally, catalyzes the reductive methylation of 2'-deoxyuridine-5'-monophosphate (dUMP) to 2'-deoxythymidine-5'-monophosphate (dTMP) while utilizing 5,10-methylenetetrahydrofolate (mTHF) as the methyl donor and reductant in the reaction, yielding dihydrofolate (DHF) as a by-product. This enzymatic reaction provides an intracellular de novo source of dTMP, an essential precursor for DNA biosynthesis. The polypeptide is Thymidylate synthase (Mycobacterium sp. (strain KMS)).